The chain runs to 48 residues: Delta-stichotoxin-Hcr1a (48 aa).

Disulfide bonds link C3–C43, C5–C33, and C26–C44. Residue K48 is modified to Lysine amide; partial; in Delta-stichotoxin-Hcr1f.

It belongs to the sea anemone sodium channel inhibitory toxin family. Type II subfamily. As to quaternary structure, probably composed of two peptide chains of 12 and 35 residues connected by two disulfide bonds (Cys-3-Cys-43 and Cys-5-Cys-33). In terms of processing, delta-SHTX-Hcr1f (RTX-VI) may be the result of post-translational modification of delta-SHTX-Hcr1a (RTX-III), which would consist of Arg-13 cleavage.

Its subcellular location is the secreted. It localises to the nematocyst. Functionally, binds to site 3 of voltage-gated sodium channels and inhibits the inactivation process. Specifically inhibits mammalian Nav1.3/SCN3A and Nav1.6/SCN8A sodium channels, as well as insect BgNav1 and VdNav1 sodium channels. Its function is as follows. Binds to site 3 of voltage-gated sodium channels and inhibits the inactivation process. Specifically inhibits mammalian Nav1.2/SCN3A (low inhibition) and Nav1.6/SCN8A sodium channels, as well as insect BgNav1 and VdNav1 sodium channels. In Radianthus crispa (Leathery sea anemone), this protein is Delta-stichotoxin-Hcr1a.